We begin with the raw amino-acid sequence, 830 residues long: Periplasmic nitrate reductase (830 aa).

The segment at residues 1–30 (MTTRREFIKRSAAVTAACTAGISLSGEASN) is a signal peptide (tat-type signal). The 57-residue stretch at 40–96 (LKWSKAPCRFCGTGCSVNVAVKDNQVVATHGDIQSEVNRGLNCVKGYFLSKIMYGKD) folds into the 4Fe-4S Mo/W bis-MGD-type domain. Positions 47, 50, 54, and 82 each coordinate [4Fe-4S] cluster. Residues lysine 84, glutamine 151, asparagine 176, cysteine 180, 213–220 (WGSNMAEM), 244–248 (STFQH), methionine 374, glutamine 378, asparagine 484, 510–511 (SE), lysine 533, aspartate 560, and 720–729 (TGRVLEHWHS) contribute to the Mo-bis(molybdopterin guanine dinucleotide) site. Position 796 (tryptophan 796) interacts with substrate. Positions 804 and 821 each coordinate Mo-bis(molybdopterin guanine dinucleotide).

This sequence belongs to the prokaryotic molybdopterin-containing oxidoreductase family. NasA/NapA/NarB subfamily. In terms of assembly, component of the periplasmic nitrate reductase NapAB complex composed of NapA and NapB. [4Fe-4S] cluster is required as a cofactor. The cofactor is Mo-bis(molybdopterin guanine dinucleotide). In terms of processing, predicted to be exported by the Tat system. The position of the signal peptide cleavage has not been experimentally proven.

The protein resides in the periplasm. The enzyme catalyses 2 Fe(II)-[cytochrome] + nitrate + 2 H(+) = 2 Fe(III)-[cytochrome] + nitrite + H2O. Functionally, catalytic subunit of the periplasmic nitrate reductase complex NapAB. Receives electrons from NapB and catalyzes the reduction of nitrate to nitrite. The protein is Periplasmic nitrate reductase of Hahella chejuensis (strain KCTC 2396).